The primary structure comprises 529 residues: MTQQDPAAAAPRPVLVVDFGAQYAQLIARRVREVNLYSEVIPHTMPADEVAAKNPAALILSGGPSSVYADDAPSLHPELLELGVPVFGICYGFQAMTQAMGGTVAKTGLREYGRTELQIQSEAGVLHEGMGESQQVWMSHGDSVSEAPEGFTVTARTEGAPVAAFECPEKRMAGVQYHPEVLHSPKGQEVLRRFLLETAGLEPTWTAGNIAEQLIEQVREQIGDEGRAICGLSGGVDSAVAAALVQRAIGDRLTCVFVDHGLLRAGEREQVEKDFVAATGAKLVTVDEREAFLQKLAGVTEPEAKRKAIGAEFIRSFERAVAGVLADAPEGSSVDFLVQGTLYPDVVESGGGTGTANIKSHHNVGGLPDDVEFELVEPLRLLFKDEVRAVGRELGLPEEIVARQPFPGPGLGIRIIGEVTEDRLETLRAADAIARAELTAAGLDDVIWQCPVVLLADVRSVGVQGDGRTYGHPIVLRPVSSEDAMTADWTRIPFDVLEKISTRITNEVEEVNRVVLDVTSKPPGTIEWE.

Residues 13–204 form the Glutamine amidotransferase type-1 domain; the sequence is PVLVVDFGAQ…LLETAGLEPT (192 aa). Cys-90 functions as the Nucleophile in the catalytic mechanism. Active-site residues include His-178 and Glu-180. One can recognise a GMPS ATP-PPase domain in the interval 205–403; it reads WTAGNIAEQL…LGLPEEIVAR (199 aa). Position 233 to 239 (233 to 239) interacts with ATP; the sequence is SGGVDSA.

Homodimer.

It carries out the reaction XMP + L-glutamine + ATP + H2O = GMP + L-glutamate + AMP + diphosphate + 2 H(+). The protein operates within purine metabolism; GMP biosynthesis; GMP from XMP (L-Gln route): step 1/1. Functionally, catalyzes the synthesis of GMP from XMP. The protein is GMP synthase [glutamine-hydrolyzing] of Corynebacterium jeikeium (strain K411).